The chain runs to 202 residues: Translation initiation factor IF-3 (202 aa).

The disordered stretch occupies residues 178–202 (TPRKTPLLKKESETTEPKKALRSIN). Positions 185–196 (LKKESETTEPKK) are enriched in basic and acidic residues.

Belongs to the IF-3 family. In terms of assembly, monomer.

It localises to the cytoplasm. IF-3 binds to the 30S ribosomal subunit and shifts the equilibrium between 70S ribosomes and their 50S and 30S subunits in favor of the free subunits, thus enhancing the availability of 30S subunits on which protein synthesis initiation begins. In Prochlorococcus marinus (strain NATL1A), this protein is Translation initiation factor IF-3.